Reading from the N-terminus, the 118-residue chain is Holo-[acyl-carrier-protein] synthase (118 aa).

Positions 8 and 57 each coordinate Mg(2+).

This sequence belongs to the P-Pant transferase superfamily. AcpS family. It depends on Mg(2+) as a cofactor.

Its subcellular location is the cytoplasm. It carries out the reaction apo-[ACP] + CoA = holo-[ACP] + adenosine 3',5'-bisphosphate + H(+). In terms of biological role, transfers the 4'-phosphopantetheine moiety from coenzyme A to a Ser of acyl-carrier-protein. The protein is Holo-[acyl-carrier-protein] synthase of Acholeplasma laidlawii (strain PG-8A).